The primary structure comprises 100 residues: Small ribosomal subunit protein uS14c (100 aa).

It belongs to the universal ribosomal protein uS14 family. Part of the 30S ribosomal subunit.

It is found in the plastid. The protein resides in the chloroplast. Functionally, binds 16S rRNA, required for the assembly of 30S particles. The polypeptide is Small ribosomal subunit protein uS14c (Phaeodactylum tricornutum (strain CCAP 1055/1)).